Consider the following 297-residue polypeptide: tRNA pseudouridine synthase B (297 aa).

The active-site Nucleophile is Asp44.

The protein belongs to the pseudouridine synthase TruB family. Type 1 subfamily.

It carries out the reaction uridine(55) in tRNA = pseudouridine(55) in tRNA. Responsible for synthesis of pseudouridine from uracil-55 in the psi GC loop of transfer RNAs. This chain is tRNA pseudouridine synthase B, found in Corynebacterium glutamicum (strain ATCC 13032 / DSM 20300 / JCM 1318 / BCRC 11384 / CCUG 27702 / LMG 3730 / NBRC 12168 / NCIMB 10025 / NRRL B-2784 / 534).